The chain runs to 498 residues: Aspartyl/glutamyl-tRNA(Asn/Gln) amidotransferase subunit B (498 aa).

It belongs to the GatB/GatE family. GatB subfamily. As to quaternary structure, heterotrimer of A, B and C subunits.

The catalysed reaction is L-glutamyl-tRNA(Gln) + L-glutamine + ATP + H2O = L-glutaminyl-tRNA(Gln) + L-glutamate + ADP + phosphate + H(+). The enzyme catalyses L-aspartyl-tRNA(Asn) + L-glutamine + ATP + H2O = L-asparaginyl-tRNA(Asn) + L-glutamate + ADP + phosphate + 2 H(+). In terms of biological role, allows the formation of correctly charged Asn-tRNA(Asn) or Gln-tRNA(Gln) through the transamidation of misacylated Asp-tRNA(Asn) or Glu-tRNA(Gln) in organisms which lack either or both of asparaginyl-tRNA or glutaminyl-tRNA synthetases. The reaction takes place in the presence of glutamine and ATP through an activated phospho-Asp-tRNA(Asn) or phospho-Glu-tRNA(Gln). This Erythrobacter litoralis (strain HTCC2594) protein is Aspartyl/glutamyl-tRNA(Asn/Gln) amidotransferase subunit B.